The primary structure comprises 192 residues: MSIQNEMPGYNEMNQYLNQQGTGLTPAEMHGLISGMICGGNDDSSWLPLLHDLTNEGMAFGHELAQALRKMHSATSDALQDDGFLFQLYLPDGDDVSVFDRADALAGWVNHFLLGLGVTQPKLDKVTGETGEAIDDLRNIAQLGYDEDEDQEELEMSLEEIIEYVRVAALLCHDTFTHPQPTAPEVQKPTLH.

It belongs to the UPF0149 family.

The protein is UPF0149 protein YgfB of Escherichia coli O127:H6 (strain E2348/69 / EPEC).